Reading from the N-terminus, the 597-residue chain is Elongation factor 4 (597 aa).

In terms of domain architecture, tr-type G spans 2-184; that stretch reads KNIRNFSIIA…EIVAKIPAPT (183 aa). Residues 14 to 19 and 131 to 134 contribute to the GTP site; these read DHGKST and NKID.

This sequence belongs to the TRAFAC class translation factor GTPase superfamily. Classic translation factor GTPase family. LepA subfamily.

Its subcellular location is the cell inner membrane. It catalyses the reaction GTP + H2O = GDP + phosphate + H(+). Functionally, required for accurate and efficient protein synthesis under certain stress conditions. May act as a fidelity factor of the translation reaction, by catalyzing a one-codon backward translocation of tRNAs on improperly translocated ribosomes. Back-translocation proceeds from a post-translocation (POST) complex to a pre-translocation (PRE) complex, thus giving elongation factor G a second chance to translocate the tRNAs correctly. Binds to ribosomes in a GTP-dependent manner. The chain is Elongation factor 4 from Neisseria gonorrhoeae (strain ATCC 700825 / FA 1090).